Consider the following 562-residue polypeptide: Acetolactate synthase isozyme 1 large subunit (562 aa).

Glu60 lines the thiamine diphosphate pocket. Residues Arg162, 264–285 (HGVR…LGAR), and 307–326 (DIDR…IQAD) contribute to the FAD site. The segment at 393–473 (QHQMWTAQAY…VKIILMNNEA (81 aa)) is thiamine pyrophosphate binding. Mg(2+) is bound by residues Asp444 and Asn471.

Belongs to the TPP enzyme family. In terms of assembly, dimer of large and small chains. Mg(2+) serves as cofactor. It depends on thiamine diphosphate as a cofactor.

The enzyme catalyses 2 pyruvate + H(+) = (2S)-2-acetolactate + CO2. It functions in the pathway amino-acid biosynthesis; L-isoleucine biosynthesis; L-isoleucine from 2-oxobutanoate: step 1/4. The protein operates within amino-acid biosynthesis; L-valine biosynthesis; L-valine from pyruvate: step 1/4. The sequence is that of Acetolactate synthase isozyme 1 large subunit (ilvB) from Escherichia coli (strain K12).